We begin with the raw amino-acid sequence, 216 residues long: Ribosomal RNA small subunit methyltransferase G (216 aa).

S-adenosyl-L-methionine is bound by residues G75, L80, and R141.

It belongs to the methyltransferase superfamily. RNA methyltransferase RsmG family.

Its subcellular location is the cytoplasm. The catalysed reaction is guanosine(527) in 16S rRNA + S-adenosyl-L-methionine = N(7)-methylguanosine(527) in 16S rRNA + S-adenosyl-L-homocysteine. In terms of biological role, specifically methylates the N7 position of guanine in position 527 of 16S rRNA. In Nitrosospira multiformis (strain ATCC 25196 / NCIMB 11849 / C 71), this protein is Ribosomal RNA small subunit methyltransferase G.